We begin with the raw amino-acid sequence, 485 residues long: Chitin synthase regulator 2 (485 aa).

Sel1-like repeat units follow at residues 164–202, 203–238, 239–275, 279–316, 317–353, 354–391, and 392–427; these read PDAQ…KHGH, PDAC…VGLH, PGAM…EHAT, PHAL…ELGY, APSA…QQDH, KDAC…ELGL, and AKAQ…EGGD. The segment at 460–485 is disordered; it reads AANLAQRSGSGSGASGKDGKDGCLIM. Residues 476–485 show a composition bias toward basic and acidic residues; it reads KDGKDGCLIM. At cysteine 482 the chain carries Cysteine methyl ester. Residue cysteine 482 is the site of S-farnesyl cysteine attachment. Residues 483–485 constitute a propeptide, removed in mature form; that stretch reads LIM.

Belongs to the SKT5 family.

It localises to the cell membrane. Its function is as follows. Activator of the chitin synthase CHS3 which polymerizes chitin, a structural polymer of the fungal cell wall. Chitin produced by CHS3 is deacetylated to chitosan, which helps to maintain cell wall integrity, anchor melanin, and offers an advantage during infection, as chitosan is less readily detected by host immunosurveillance. The chain is Chitin synthase regulator 2 from Cryptococcus neoformans var. grubii serotype A (strain H99 / ATCC 208821 / CBS 10515 / FGSC 9487) (Filobasidiella neoformans var. grubii).